Here is a 195-residue protein sequence, read N- to C-terminus: Flavin prenyltransferase UbiX (195 aa).

FMN-binding positions include 17 to 19 (GGS), serine 43, 94 to 97 (SAGT), and arginine 129. Dimethylallyl phosphate-binding residues include tyrosine 159 and arginine 175.

This sequence belongs to the UbiX/PAD1 family.

It catalyses the reaction dimethylallyl phosphate + FMNH2 = prenylated FMNH2 + phosphate. Flavin prenyltransferase that catalyzes the synthesis of the prenylated FMN cofactor (prenyl-FMN) for 4-hydroxy-3-polyprenylbenzoic acid decarboxylase UbiD. The prenyltransferase is metal-independent and links a dimethylallyl moiety from dimethylallyl monophosphate (DMAP) to the flavin N5 and C6 atoms of FMN. This is Flavin prenyltransferase UbiX from Deinococcus radiodurans (strain ATCC 13939 / DSM 20539 / JCM 16871 / CCUG 27074 / LMG 4051 / NBRC 15346 / NCIMB 9279 / VKM B-1422 / R1).